The sequence spans 219 residues: ATP phosphoribosyltransferase (219 aa).

It belongs to the ATP phosphoribosyltransferase family. Short subfamily. As to quaternary structure, heteromultimer composed of HisG and HisZ subunits.

It is found in the cytoplasm. It catalyses the reaction 1-(5-phospho-beta-D-ribosyl)-ATP + diphosphate = 5-phospho-alpha-D-ribose 1-diphosphate + ATP. Its pathway is amino-acid biosynthesis; L-histidine biosynthesis; L-histidine from 5-phospho-alpha-D-ribose 1-diphosphate: step 1/9. In terms of biological role, catalyzes the condensation of ATP and 5-phosphoribose 1-diphosphate to form N'-(5'-phosphoribosyl)-ATP (PR-ATP). Has a crucial role in the pathway because the rate of histidine biosynthesis seems to be controlled primarily by regulation of HisG enzymatic activity. In Clostridium kluyveri (strain NBRC 12016), this protein is ATP phosphoribosyltransferase.